The chain runs to 648 residues: Dystrotelin (648 aa).

The ZZ-type zinc finger occupies 223–279 (QHRVHCHACKAFPITGLRYRCLKCLNVHLCQSCFLTERRSRKHKPSHSVLEYCTQPS). The Zn(2+) site is built by C228, C231, C243, C246, C252, C255, H265, and H269. Residues 367–446 (QRETAELQKD…LDTVRHLLSL (80 aa)) adopt a coiled-coil conformation. The span at 455-474 (SHSNLQLEQDGSINENNWTQ) shows a compositional bias: polar residues. 2 disordered regions span residues 455 to 509 (SHSN…DTLY) and 536 to 557 (QREEEELQEEEEGLHEKEEGLP). Residues 479 to 502 (KPHESSSTEHEVEERGTRQERRFE) are compositionally biased toward basic and acidic residues. Acidic residues predominate over residues 538–548 (EEEELQEEEEG).

It is found in the cell membrane. This is Dystrotelin (dytn) from Danio rerio (Zebrafish).